The sequence spans 295 residues: Probable CBASS effector molecule IK1_05631 (295 aa).

The next 4 helical transmembrane spans lie at 26–46 (IFYA…ISIY), 56–76 (SNTG…AYQI), 167–187 (ILLF…GFFV), and 190–210 (SMQE…IYGF).

It is found in the cell membrane. In terms of biological role, effector protein of a CBASS antiviral system. CBASS (cyclic oligonucleotide-based antiphage signaling system) provides immunity against bacteriophage. The CD-NTase protein synthesizes cyclic nucleotides in response to infection; these serve as specific second messenger signals. The signals activate a diverse range of effectors, leading to bacterial cell death and thus abortive phage infection. A type I-B CBASS system. Its function is as follows. Protects B.subtilis against phage infection. When IK1_05630 and IK1_05631 are introduced in B.subtilis BEST7003 there is 1000-fold protection against phage SBSphiC. Both genes are required for protection. Activation leads to bacterial cell lysis and death, which occurs before the phage has finished its replication cycle, thus protecting non-infected bacteria by aborting the phage infection and preventing its propagation. This chain is Probable CBASS effector molecule IK1_05631, found in Bacillus cereus (strain VD146).